The following is a 407-amino-acid chain: Myeloid cell nuclear differentiation antigen (407 aa).

In terms of domain architecture, Pyrin spans 1 to 88; that stretch reads MVNEYKKILL…VNNLRKEKSK (88 aa). The interval 108–207 is disordered; that stretch reads EVGLAAPAPT…RQVDARRNVP (100 aa). Residues 131-137 carry the Nuclear localization signal motif; the sequence is PVAQKRK. Basic and acidic residues predominate over residues 139 to 148; the sequence is PNKEKTEAKR. Over residues 177–190 the composition is skewed to low complexity; that stretch reads QTSSSTPSNTSFTP. An HIN-200 domain is found at 196–394; sequence AQRQVDARRN…CGSHSFIKVI (199 aa).

As to quaternary structure, participates in a ternary complex with YY1 and the YY1 target DNA element. Binds nucleolin and nucleophosmin/NPM/B23. In terms of tissue distribution, expressed constitutively in cells of the myeloid lineage. Found in promyelocyte stage cells as well as in all other stage cells including peripheral blood monocytes and granulocytes. Also appears in myeloblast cells in some cases of acute myeloid Leukemia.

It localises to the nucleus. The protein localises to the cytoplasm. May act as a transcriptional activator/repressor in the myeloid lineage. Plays a role in the granulocyte/monocyte cell-specific response to interferon. Stimulates the DNA binding of the transcriptional repressor protein YY1. The chain is Myeloid cell nuclear differentiation antigen (MNDA) from Homo sapiens (Human).